Here is a 568-residue protein sequence, read N- to C-terminus: Pentatricopeptide repeat-containing protein At1g73400, mitochondrial (568 aa).

Residues 1–55 constitute a mitochondrion transit peptide; it reads MMRRLVSYFVRSRFSLHLSTTPPQRSALFSHILSSHLDSIQINKKISSFSVHRFC. PPR repeat units follow at residues 233-263, 267-301, 302-336, 340-374, 375-409, 410-444, 445-479, and 480-514; these read EINA…MRHR, DANT…GHKP, ENFT…GSAV, TAKT…GCLP, DVST…GYPP, DIVT…RCAP, SVQT…DCVQ, and DVET…GLKL.

Belongs to the PPR family. P subfamily.

Its subcellular location is the mitochondrion. In Arabidopsis thaliana (Mouse-ear cress), this protein is Pentatricopeptide repeat-containing protein At1g73400, mitochondrial.